Consider the following 413-residue polypeptide: uncharacterized protein (413 aa).

The N-terminal stretch at 1 to 20 (MRVIIVIMMVVFVVVGTSSG) is a signal peptide.

This is an uncharacterized protein from Archaeoglobus fulgidus (strain ATCC 49558 / DSM 4304 / JCM 9628 / NBRC 100126 / VC-16).